Consider the following 120-residue polypeptide: Phosphoribosyl-AMP cyclohydrolase (120 aa).

D75 provides a ligand contact to Mg(2+). Zn(2+) is bound at residue C76. Residues D77 and D79 each coordinate Mg(2+). Zn(2+) contacts are provided by C92 and C99.

It belongs to the PRA-CH family. As to quaternary structure, homodimer. Requires Mg(2+) as cofactor. The cofactor is Zn(2+).

It is found in the cytoplasm. The enzyme catalyses 1-(5-phospho-beta-D-ribosyl)-5'-AMP + H2O = 1-(5-phospho-beta-D-ribosyl)-5-[(5-phospho-beta-D-ribosylamino)methylideneamino]imidazole-4-carboxamide. Its pathway is amino-acid biosynthesis; L-histidine biosynthesis; L-histidine from 5-phospho-alpha-D-ribose 1-diphosphate: step 3/9. Catalyzes the hydrolysis of the adenine ring of phosphoribosyl-AMP. The chain is Phosphoribosyl-AMP cyclohydrolase from Methanosarcina mazei (strain ATCC BAA-159 / DSM 3647 / Goe1 / Go1 / JCM 11833 / OCM 88) (Methanosarcina frisia).